A 149-amino-acid polypeptide reads, in one-letter code: Urease accessory protein UreE (149 aa).

The protein belongs to the UreE family.

Its subcellular location is the cytoplasm. In terms of biological role, involved in urease metallocenter assembly. Binds nickel. Probably functions as a nickel donor during metallocenter assembly. This Prochlorococcus marinus (strain MIT 9301) protein is Urease accessory protein UreE.